Here is a 451-residue protein sequence, read N- to C-terminus: Eukaryotic translation initiation factor 3 subunit E (451 aa).

Positions 245-425 (PFFNHEPARD…GTVVMNHPPS (181 aa)) constitute a PCI domain.

Belongs to the eIF-3 subunit E family. Component of the eukaryotic translation initiation factor 3 (eIF-3) complex.

It localises to the cytoplasm. Component of the eukaryotic translation initiation factor 3 (eIF-3) complex, which is involved in protein synthesis of a specialized repertoire of mRNAs and, together with other initiation factors, stimulates binding of mRNA and methionyl-tRNAi to the 40S ribosome. The eIF-3 complex specifically targets and initiates translation of a subset of mRNAs involved in cell proliferation. The protein is Eukaryotic translation initiation factor 3 subunit E (int6) of Sclerotinia sclerotiorum (strain ATCC 18683 / 1980 / Ss-1) (White mold).